The chain runs to 152 residues: Small ribosomal subunit protein uS15 (152 aa).

This sequence belongs to the universal ribosomal protein uS15 family. As to quaternary structure, part of the 30S ribosomal subunit.

This chain is Small ribosomal subunit protein uS15, found in Methanospirillum hungatei JF-1 (strain ATCC 27890 / DSM 864 / NBRC 100397 / JF-1).